The following is a 470-amino-acid chain: MPGFDYKFLEKPKRRLLCPLCGKPMREPVQVSTCGHRFCDTCLQEFLSEGVFKCPEDQLPLDYAKIYPDPELEVQVLGLPIRCIHSEEGCRWSGPLRHLQGHLNTCSFNVIPCPNRCPMKLSRRDLPAHLQHDCPKRRLKCEFCGCDFSGEAYESHEGMCPQESVYCENKCGARMMRRLLAQHATSECPKRTQPCTYCTKEFVFDTIQSHQYQCPRLPVACPNQCGVGTVAREDLPGHLKDSCNTALVLCPFKDSGCKHRCPKLAMARHVEESVKPHLAMMCALVSRQRQELQELRRELEELSVGSDGVLIWKIGSYGRRLQEAKAKPNLECFSPAFYTHKYGYKLQVSAFLNGNGSGEGTHLSLYIRVLPGAFDNLLEWPFARRVTFSLLDQSDPGLAKPQHVTETFHPDPNWKNFQKPGTWRGSLDESSLGFGYPKFISHQDIRKRNYVRDDAVFIRAAVELPRKILS.

The RING-type zinc finger occupies 18–58 (CPLCGKPMREPVQVSTCGHRFCDTCLQEFLSEGVFKCPEDQ). 3 TRAF-type zinc fingers span residues 102-154 (HLNT…EAYE), 155-208 (SHEG…DTIQ), and 209-266 (SHQY…KLAM). Lysine 263 participates in a covalent cross-link: Glycyl lysine isopeptide (Lys-Gly) (interchain with G-Cter in ubiquitin). Residues 277–309 (HLAMMCALVSRQRQELQELRRELEELSVGSDGV) adopt a coiled-coil conformation. The MATH domain occupies 307 to 462 (DGVLIWKIGS…DDAVFIRAAV (156 aa)). Residue serine 426 is modified to Phosphoserine.

Belongs to the TNF receptor-associated factor family. B subfamily. In terms of assembly, homotrimer. Interacts with LTBR/TNFRSF3, NGFR/TNFRSF16, RPS6KB1 and TGFB1I1. Interacts with SMURF1. Interacts (via TRAF domain) with MAP3K4 (via kinase domain). Interacts with NCF1, TICAM1, IRAK1 and TRAF6, and is probably part of a complex containing TRAF4, NCF1, TICAM1, IRAK1 and TRAF6. Interacts (via MATH domain) with GP6 and GP1BB. Interacts with EGFR (via C-terminal region); this interaction promotes the formation of EGFR asymmetric dimers. Interacts with PKM; this interaction promotes PKM kinase activity. In terms of processing, polyubiquitinated, leading to its proteasomal degradation. Ubiquitinated at Lys-263 by the SCF(FBXL2) complex, leading to its degradation by the proteasome. As to expression, expressed in epithelial cells of thymus, dendritic cells of lymph node, and in the basal cell layer of epithelia such as epidermis, nasopharynx, respiratory tract, salivary gland, and esophagus.

It localises to the cytoplasm. Its subcellular location is the nucleus. The protein localises to the perinuclear region. The protein resides in the cell junction. It is found in the tight junction. It localises to the cell membrane. Its subcellular location is the cytoskeleton. The enzyme catalyses S-ubiquitinyl-[E2 ubiquitin-conjugating enzyme]-L-cysteine + [acceptor protein]-L-lysine = [E2 ubiquitin-conjugating enzyme]-L-cysteine + N(6)-ubiquitinyl-[acceptor protein]-L-lysine.. It participates in protein degradation; proteasomal ubiquitin-dependent pathway. In terms of biological role, adapter protein with E3 ligase activity that is involved in many diverse biological processes including cell proliferation, migration, differentiation, DNA repair, platelet activation or apoptosis. Promotes EGFR-mediated signaling by facilitating the dimerization of EGFR and downstream AKT activation thereby promoting cell proliferation. Ubiquitinates SMURF2 through 'Lys-48'-linked ubiquitin chain leading to SMURF2 degradation through the proteasome and subsequently osteogenic differentiation. Promotes 'Lys-63'-mediated ubiquitination of CHK1 which in turn activates cell cycle arrest and activation of DNA repair. In addition, promotes an atypical 'Lys-29'-linked ubiquitination at the C-terminal end of IRS1 which is crucial for insulin-like growth factor (IGF) signal transduction. Regulates activation of NF-kappa-B in response to signaling through Toll-like receptors. Required for normal skeleton development, and for normal development of the respiratory tract. Required for activation of RPS6KB1 in response to TNF signaling. Modulates TRAF6 functions. Inhibits adipogenic differentiation by activating pyruvate kinase PKM activity and subsequently the beta-catenin signaling pathway. The chain is TNF receptor-associated factor 4 (TRAF4) from Homo sapiens (Human).